Reading from the N-terminus, the 37-residue chain is Large ribosomal subunit protein bL36 (37 aa).

It belongs to the bacterial ribosomal protein bL36 family.

The protein is Large ribosomal subunit protein bL36 of Borreliella afzelii (strain PKo) (Borrelia afzelii).